The chain runs to 114 residues: MEIVNKQSFQEVLEYVRMYRLKNRIKRDMEDNNRKIRDNQKRILLLDNLNQYIRDDMTIAEVRGIIESMRDDYESRVDDYTIRNAELSKQRREASTKMKEQKKAHAELLKNAEK.

A coiled-coil region spans residues 70–111; sequence RDDYESRVDDYTIRNAELSKQRREASTKMKEQKKAHAELLKN. Residues 89–114 are disordered; it reads KQRREASTKMKEQKKAHAELLKNAEK.

The protein belongs to the pole-localizer TmaR family.

It is found in the cytoplasm. In terms of biological role, pole-localizer protein involved in the regulation of several cellular processes. This chain is Pole-localizer protein TmaR, found in Haemophilus influenzae (strain 86-028NP).